The following is a 269-amino-acid chain: Fructose permease IIC component (269 aa).

The region spanning methionine 1–leucine 234 is the PTS EIIC type-4 domain. 7 helical membrane-spanning segments follow: residues serine 2 to leucine 22, threonine 35 to leucine 54, valine 64 to alanine 86, isoleucine 90 to phenylalanine 110, valine 149 to glycine 169, isoleucine 181 to proline 201, and phenylalanine 206 to alanine 226.

Its subcellular location is the cell membrane. In terms of biological role, the phosphoenolpyruvate-dependent sugar phosphotransferase system (PTS), a major carbohydrate active -transport system, catalyzes the phosphorylation of incoming sugar substrates concomitant with their translocation across the cell membrane. This system is involved in fructose transport. This is Fructose permease IIC component (levF) from Bacillus subtilis (strain 168).